The following is a 171-amino-acid chain: Lipoprotein signal peptidase (171 aa).

3 helical membrane-spanning segments follow: residues 7–27 (GLLA…GLYF), 64–84 (IGRW…GLWM), and 88–108 (TSRL…GNAI). Residues aspartate 118 and aspartate 136 contribute to the active site. A helical transmembrane segment spans residues 128–148 (SWYVFNVADAAIVAGVIGLIL).

It belongs to the peptidase A8 family.

The protein localises to the cell inner membrane. It catalyses the reaction Release of signal peptides from bacterial membrane prolipoproteins. Hydrolyzes -Xaa-Yaa-Zaa-|-(S,diacylglyceryl)Cys-, in which Xaa is hydrophobic (preferably Leu), and Yaa (Ala or Ser) and Zaa (Gly or Ala) have small, neutral side chains.. Its pathway is protein modification; lipoprotein biosynthesis (signal peptide cleavage). Its function is as follows. This protein specifically catalyzes the removal of signal peptides from prolipoproteins. This chain is Lipoprotein signal peptidase, found in Methylobacterium radiotolerans (strain ATCC 27329 / DSM 1819 / JCM 2831 / NBRC 15690 / NCIMB 10815 / 0-1).